A 173-amino-acid chain; its full sequence is Probable glutathione peroxidase 5 (173 aa).

A lipid anchor (N-myristoyl glycine) is attached at Gly-2. Cys-46 is an active-site residue.

It belongs to the glutathione peroxidase family. In terms of tissue distribution, ubiquitous.

Its subcellular location is the cell membrane. It carries out the reaction 2 glutathione + H2O2 = glutathione disulfide + 2 H2O. Its function is as follows. May constitute a glutathione peroxidase-like protective system against oxidative stresses. This chain is Probable glutathione peroxidase 5 (GPX5), found in Arabidopsis thaliana (Mouse-ear cress).